Consider the following 121-residue polypeptide: Small ribosomal subunit protein bS6 (121 aa).

It belongs to the bacterial ribosomal protein bS6 family.

Binds together with bS18 to 16S ribosomal RNA. The polypeptide is Small ribosomal subunit protein bS6 (Rickettsia peacockii (strain Rustic)).